The chain runs to 511 residues: Aprataxin and PNK-like factor (511 aa).

The FHA-like domain occupies methionine 1–glutamate 108. Serine 116 is subject to Phosphoserine; by ATM. Serine 149 is modified (phosphoserine). The short motif at arginine 182–leucine 191 is the KBM element. The interval lysine 223–glutamate 370 is disordered. Polar residues-rich tracts occupy residues glutamine 225 to glutamine 249 and serine 263 to arginine 293. The segment covering valine 304–proline 315 has biased composition (basic residues). The span at cysteine 324–histidine 344 shows a compositional bias: polar residues. The segment covering serine 345 to glutamate 355 has biased composition (low complexity). The a glycoprotein site is built by arginine 376, tyrosine 381, tyrosine 386, and arginine 387. The PBZ-type 1 zinc-finger motif lies at threonine 377–histidine 398. The flexible linker stretch occupies residues glycine 406–aspartate 416. The PBZ-type 2 zinc-finger motif lies at proline 419–histidine 440. A glycoprotein-binding residues include tyrosine 423, tyrosine 428, and arginine 429. Residues leucine 449 to valine 497 are disordered. The segment covering phenylalanine 468–valine 497 has biased composition (acidic residues). The short motif at tyrosine 476–leucine 500 is the NAP1L motif element. Positions proline 487–lysine 511 form a coiled coil.

Belongs to the APLF family. Interacts with LIG4. Interacts with PARP1. Interacts with XRCC4. Interacts (via KBM motif) with XRCC5 and XRCC6; promoting recruitment to DNA damage sites. Interacts with XRCC1. Interacts (via C-terminal disordered region) with histones; interacts with histone H2A, H2B and H3-H4. In terms of processing, poly-ADP-ribosylated. In addition to binding non covalently poly-ADP-ribose via its PBZ-type zinc fingers, the protein is also covalently poly-ADP-ribosylated by PARP1. Phosphorylated in an ATM-dependent manner upon double-strand DNA break.

The protein localises to the nucleus. Its subcellular location is the chromosome. It is found in the cytoplasm. The protein resides in the cytosol. Its function is as follows. Histone chaperone involved in single-strand and double-strand DNA break repair. Recruited to sites of DNA damage through interaction with branched poly-ADP-ribose chains, a polymeric post-translational modification synthesized transiently at sites of chromosomal damage to accelerate DNA strand break repair reactions. Following recruitment to DNA damage sites, acts as a histone chaperone that mediates histone eviction during DNA repair and promotes recruitment of histone variant MACROH2A1. Also has a nuclease activity: displays apurinic-apyrimidinic (AP) endonuclease and 3'-5' exonuclease activities in vitro. Also able to introduce nicks at hydroxyuracil and other types of pyrimidine base damage. Together with PARP3, promotes the retention of the LIG4-XRCC4 complex on chromatin and accelerate DNA ligation during non-homologous end-joining (NHEJ). Also acts as a negative regulator of cell pluripotency by promoting histone exchange. Required for the embryo implantation during the epithelial to mesenchymal transition in females. The protein is Aprataxin and PNK-like factor of Homo sapiens (Human).